An 81-amino-acid polypeptide reads, in one-letter code: Cytochrome b559 subunit alpha (81 aa).

A helical membrane pass occupies residues 21-35; it reads VIHSITIPSLFVSGW. Histidine 23 serves as a coordination point for heme.

Belongs to the PsbE/PsbF family. In terms of assembly, heterodimer of an alpha subunit and a beta subunit. PSII is composed of 1 copy each of membrane proteins PsbA, PsbB, PsbC, PsbD, PsbE, PsbF, PsbH, PsbI, PsbJ, PsbK, PsbL, PsbM, PsbT, PsbX, PsbY, PsbZ, Psb30/Ycf12, at least 3 peripheral proteins of the oxygen-evolving complex and a large number of cofactors. It forms dimeric complexes. Heme b serves as cofactor.

The protein localises to the plastid. It is found in the chloroplast thylakoid membrane. Functionally, this b-type cytochrome is tightly associated with the reaction center of photosystem II (PSII). PSII is a light-driven water:plastoquinone oxidoreductase that uses light energy to abstract electrons from H(2)O, generating O(2) and a proton gradient subsequently used for ATP formation. It consists of a core antenna complex that captures photons, and an electron transfer chain that converts photonic excitation into a charge separation. This chain is Cytochrome b559 subunit alpha, found in Mesostigma viride (Green alga).